The sequence spans 397 residues: 2,3-bisphosphoglycerate-independent phosphoglycerate mutase (397 aa).

Belongs to the BPG-independent phosphoglycerate mutase family. A-PGAM subfamily.

It carries out the reaction (2R)-2-phosphoglycerate = (2R)-3-phosphoglycerate. It participates in carbohydrate degradation; glycolysis; pyruvate from D-glyceraldehyde 3-phosphate: step 3/5. Its function is as follows. Catalyzes the interconversion of 2-phosphoglycerate and 3-phosphoglycerate. The sequence is that of 2,3-bisphosphoglycerate-independent phosphoglycerate mutase (apgM) from Methanosarcina mazei (strain ATCC BAA-159 / DSM 3647 / Goe1 / Go1 / JCM 11833 / OCM 88) (Methanosarcina frisia).